A 381-amino-acid polypeptide reads, in one-letter code: Endophilin-A homolog (381 aa).

A membrane-binding amphipathic helix region spans residues 1–21; that stretch reads MSLSGLRKQFNKANQYLSETM. A BAR domain is found at 18-247; it reads SETMGAAEPT…LGHRIKDAAA (230 aa). Residues 170 to 238 adopt a coiled-coil conformation; sequence CKKRQQRRDD…QCLENLQQQL (69 aa). The tract at residues 246 to 323 is disordered; it reads AARPREEHVP…PPPLSQQQKP (78 aa). Residues 260 to 271 show a composition bias toward polar residues; sequence ANESRTPRSSFR. Over residues 305–317 the composition is skewed to pro residues; it reads YQGPPPGGLPPPL. The 60-residue stretch at 320–379 folds into the SH3 domain; sequence QQKPQCRALFDFDAQSEGELDFKEGTLIELVSQIDENWYEGRVNGKTGLFPVTYVQVLVP.

Belongs to the endophilin family. May form a homodimer (via the BAR domain). In terms of tissue distribution, expressed in neurons and posterior intestine.

It is found in the synapse. The protein resides in the cytoplasmic vesicle. It localises to the secretory vesicle. The protein localises to the synaptic vesicle. Its subcellular location is the membrane. In terms of biological role, involved in synaptic vesicle (SV) recycling in neurons probably by regulating clathrin-mediated endocytosis. By controlling SV endocytosis, regulates the rate of excitatory postsynaptic currents (EPSCs) at neuromuscular junctions and thus locomotion. In a similar manner, involved in necrotic neuronal cell death induced by abnormal hyperactivation of ion channels. Plays a minor role in responses to mechanical stimuli. Plays a minor role in unc-26/synaptojanin localization to synapses. This Caenorhabditis elegans protein is Endophilin-A homolog.